The sequence spans 220 residues: UPF0319 protein CKO_02102 (220 aa).

The signal sequence occupies residues 1 to 20 (MKTGIITMLFVLYLPVTAFA).

The protein belongs to the UPF0319 family.

This chain is UPF0319 protein CKO_02102, found in Citrobacter koseri (strain ATCC BAA-895 / CDC 4225-83 / SGSC4696).